The sequence spans 178 residues: UPF0228 protein MM_0401 (178 aa).

Belongs to the UPF0228 family.

This chain is UPF0228 protein MM_0401, found in Methanosarcina mazei (strain ATCC BAA-159 / DSM 3647 / Goe1 / Go1 / JCM 11833 / OCM 88) (Methanosarcina frisia).